The chain runs to 1168 residues: Transcription-repair-coupling factor (1168 aa).

The Helicase ATP-binding domain maps to 633 to 794 (DMQKSRPMDR…MLGVRDLSVI (162 aa)). Position 646–653 (646–653 (GDVGYGKT)) interacts with ATP. The DEEQ box signature appears at 747-750 (DEEQ). Residues 808 to 969 (VLEQNMSFIK…GFKIAMRDLN (162 aa)) form the Helicase C-terminal domain.

This sequence in the N-terminal section; belongs to the UvrB family. The protein in the C-terminal section; belongs to the helicase family. RecG subfamily.

The protein localises to the cytoplasm. Couples transcription and DNA repair by recognizing RNA polymerase (RNAP) stalled at DNA lesions. Mediates ATP-dependent release of RNAP and its truncated transcript from the DNA, and recruitment of nucleotide excision repair machinery to the damaged site. The polypeptide is Transcription-repair-coupling factor (Staphylococcus aureus (strain Mu50 / ATCC 700699)).